Consider the following 195-residue polypeptide: MTPTLLSAFWTYTLITAMTPGPNNILALSSATSHGFRQSTRVLAGMSLGFLIVMLLCAGISFSLAVIDPAAVHLLSWAGAAYIVWLAWKIATSPTKEDGLQAKPISFWASFALQFVNVKIILYGVTALSTFVLPQTQALSWVVGVSVLLAMIGTFGNVCWALAGHLFQRLFRQYGRQLNIVLALLLVYCAVRIFY.

The Periplasmic portion of the chain corresponds to 1-7; that stretch reads MTPTLLS. A helical membrane pass occupies residues 8 to 28; that stretch reads AFWTYTLITAMTPGPNNILAL. Residues 29–46 lie on the Cytoplasmic side of the membrane; that stretch reads SSATSHGFRQSTRVLAGM. The helical transmembrane segment at 47–67 threads the bilayer; that stretch reads SLGFLIVMLLCAGISFSLAVI. At 68–69 the chain is on the periplasmic side; it reads DP. The chain crosses the membrane as a helical span at residues 70–90; it reads AAVHLLSWAGAAYIVWLAWKI. The Cytoplasmic segment spans residues 91 to 104; the sequence is ATSPTKEDGLQAKP. The chain crosses the membrane as a helical span at residues 105–125; that stretch reads ISFWASFALQFVNVKIILYGV. Over 126–141 the chain is Periplasmic; that stretch reads TALSTFVLPQTQALSW. Residues 142-162 traverse the membrane as a helical segment; the sequence is VVGVSVLLAMIGTFGNVCWAL. Topologically, residues 163–176 are cytoplasmic; it reads AGHLFQRLFRQYGR. The helical transmembrane segment at 177–194 threads the bilayer; it reads QLNIVLALLLVYCAVRIF. Tyr-195 is a topological domain (periplasmic).

The protein belongs to the Rht family.

It localises to the cell inner membrane. The enzyme catalyses O-acetyl-L-serine(in) = O-acetyl-L-serine(out). It catalyses the reaction L-cysteine(in) = L-cysteine(out). Exporter of O-acetylserine (OAS) and cysteine. In Escherichia coli O9:H4 (strain HS), this protein is Cysteine/O-acetylserine efflux protein (eamB).